The following is a 520-amino-acid chain: ATP-dependent clpX-like chaperone, mitochondrial (520 aa).

A mitochondrion-targeting transit peptide spans Met-1–Tyr-13. Gly-140–Thr-147 provides a ligand contact to ATP.

The protein belongs to the ClpX chaperone family. As to quaternary structure, homohexamer that forms a ring structure; this hexamerization requires ATP binding. Interacts with HEM1.

The protein resides in the mitochondrion inner membrane. Functionally, ATP-dependent unfoldase that stimulates the incorporation of the pyridoxal phosphate cofactor into 5-aminolevulinate synthase (HEM1), thereby activating 5-aminolevulinate (ALA) synthesis, the first step in heme biosynthesis. Up-regulates heme biosynthesis. The chain is ATP-dependent clpX-like chaperone, mitochondrial from Saccharomyces cerevisiae (strain ATCC 204508 / S288c) (Baker's yeast).